Consider the following 185-residue polypeptide: Ribosome-recycling factor (185 aa).

It belongs to the RRF family.

The protein localises to the cytoplasm. In terms of biological role, responsible for the release of ribosomes from messenger RNA at the termination of protein biosynthesis. May increase the efficiency of translation by recycling ribosomes from one round of translation to another. The polypeptide is Ribosome-recycling factor (Clostridioides difficile (strain 630) (Peptoclostridium difficile)).